A 286-amino-acid chain; its full sequence is Prepilin leader peptidase/N-methyltransferase (286 aa).

The chain crosses the membrane as a helical span at residues 10 to 30 (FAVPLAAVLGLLVGSFLNVVI). Residues Cys-70, Cys-73, Cys-95, and Cys-98 each contribute to the Zn(2+) site. The next 6 membrane-spanning stretches (helical) occupy residues 102–122 (ISIR…LVAW), 126–146 (WSWI…LTFI), 157–177 (MTLP…FVPL), 181–201 (VLGA…YKLL), 224–244 (ISAL…AAIV), and 250–270 (GRHF…FTAN).

This sequence belongs to the peptidase A24 family. It depends on Zn(2+) as a cofactor.

The protein resides in the cell inner membrane. The catalysed reaction is Typically cleaves a -Gly-|-Phe- bond to release an N-terminal, basic peptide of 5-8 residues from type IV prepilin, and then N-methylates the new N-terminal amino group, the methyl donor being S-adenosyl-L-methionine.. Its function is as follows. Plays an essential role in type IV pili and type II pseudopili formation by proteolytically removing the leader sequence from substrate proteins and subsequently monomethylating the alpha-amino group of the newly exposed N-terminal phenylalanine. This chain is Prepilin leader peptidase/N-methyltransferase (pilD), found in Neisseria gonorrhoeae.